The primary structure comprises 107 residues: U1-lycotoxin-Ls1d (107 aa).

An N-terminal signal peptide occupies residues 1 to 20 (MMKVLVVVALLVTLISYSSS). The propeptide occupies 21-41 (EGIDDLEADELLSLMANEQTR). 4 disulfides stabilise this stretch: Cys44–Cys59, Cys51–Cys68, Cys58–Cys86, and Cys70–Cys84.

Belongs to the neurotoxin 19 (CSTX) family. 04 (U1-Lctx) subfamily. Expressed by the venom gland.

The protein resides in the secreted. This is U1-lycotoxin-Ls1d from Lycosa singoriensis (Wolf spider).